Reading from the N-terminus, the 342-residue chain is Tetraacyldisaccharide 4'-kinase (342 aa).

68–75 is an ATP binding site; that stretch reads TVGGTGKT.

It belongs to the LpxK family.

It carries out the reaction a lipid A disaccharide + ATP = a lipid IVA + ADP + H(+). The protein operates within glycolipid biosynthesis; lipid IV(A) biosynthesis; lipid IV(A) from (3R)-3-hydroxytetradecanoyl-[acyl-carrier-protein] and UDP-N-acetyl-alpha-D-glucosamine: step 6/6. In terms of biological role, transfers the gamma-phosphate of ATP to the 4'-position of a tetraacyldisaccharide 1-phosphate intermediate (termed DS-1-P) to form tetraacyldisaccharide 1,4'-bis-phosphate (lipid IVA). This is Tetraacyldisaccharide 4'-kinase from Burkholderia ambifaria (strain ATCC BAA-244 / DSM 16087 / CCUG 44356 / LMG 19182 / AMMD) (Burkholderia cepacia (strain AMMD)).